Consider the following 315-residue polypeptide: 2-oxoglutarate and iron-dependent oxygenase domain-containing protein 3 (315 aa).

Positions 1–32 are disordered; that stretch reads MAPQRRGPPRVPEGNSAAERRHANSTKKDRLP. At 1 to 41 the chain is on the cytoplasmic side; sequence MAPQRRGPPRVPEGNSAAERRHANSTKKDRLPQEAQRTWLR. Positions 18 to 32 are enriched in basic and acidic residues; it reads AERRHANSTKKDRLP. Residues 42 to 62 traverse the membrane as a helical; Signal-anchor for type II membrane protein segment; the sequence is IVALGVSLALVTFLLWSSAGI. Residues 63–315 are Lumenal-facing; sequence DDDVAEVVAH…DHGIEDPVLT (253 aa). A Fe2OG dioxygenase domain is found at 203–305; it reads KPTFFSRINS…AITIAFTCNP (103 aa). Residue Asn211 is glycosylated (N-linked (GlcNAc...) asparagine). Residues His226 and Asp228 each coordinate Fe cation. The N-linked (GlcNAc...) asparagine glycan is linked to Asn263. Residue His284 participates in Fe cation binding. Arg294 is an active-site residue. Arg294 contacts 2-oxoglutarate.

The protein belongs to the OGFOD3 family. It depends on Fe(2+) as a cofactor. L-ascorbate serves as cofactor.

It localises to the membrane. In Rattus norvegicus (Rat), this protein is 2-oxoglutarate and iron-dependent oxygenase domain-containing protein 3 (Ogfod3).